Consider the following 124-residue polypeptide: Fluoride-specific ion channel FluC 2 (124 aa).

4 helical membrane passes run 8-28 (LPNQ…GALV), 34-54 (NDLL…GLPF), 60-80 (LLLG…MVEC), and 93-113 (LGLI…GFLI). Residues Gly68 and Thr71 each coordinate Na(+).

The protein belongs to the fluoride channel Fluc/FEX (TC 1.A.43) family.

It localises to the cell inner membrane. It carries out the reaction fluoride(in) = fluoride(out). With respect to regulation, na(+) is not transported, but it plays an essential structural role and its presence is essential for fluoride channel function. In terms of biological role, fluoride-specific ion channel. Important for reducing fluoride concentration in the cell, thus reducing its toxicity. The polypeptide is Fluoride-specific ion channel FluC 2 (Prochlorococcus marinus (strain MIT 9313)).